The following is a 533-amino-acid chain: MTEDNIAPITSVKVVTDKCTYKDNELLTKYSYENAVVTKTASGRFDVTPTVQDYVFKLDLKKPEKLGIMLIGLGGNNGSTLVASVLANKHNVEFQTKEGVKQPNYFGSMTQCSTLKLGIDAEGNDVYAPFNSLLPMVSPNDFVVSGWDINNADLYEAMQRSQVLEYDLQQRLKAKMSLVKPLPSIYYPDFIAANQDERANNCINLDEKGNVTTRGKWTHLQRIRRDIQNFKEENALDKVIVLWTANTERYVEVSPGVNDTMENLLQSIKNDHEEIAPSTIFAAASILEGVPYINGSPQNTFVPGLVQLAEHEGTFIAGDDLKSGQTKLKSVLAQFLVDAGIKPVSIASYNHLGNNDGYNLSAPKQFRSKEISKSSVIDDIIASNDILYNDKLGKKVDHCIVIKYMKPVGDSKVAMDEYYSELMLGGHNRISIHNVCEDSLLATPLIIDLLVMTEFCTRVSYKKVDPVKEDAGKFENFYPVLTFLSYWLKAPLTRPGFHPVNGLNKQRTALENFLRLLIGLPSQNELRFEERLL.

Threonine 48 is modified (phosphothreonine). Glycine 74, glycine 75, asparagine 76, asparagine 77, and aspartate 148 together coordinate NAD(+). 2 positions are modified to phosphoserine: serine 177 and serine 184. 17 residues coordinate NAD(+): serine 184, isoleucine 185, glutamine 195, aspartate 196, arginine 198, threonine 244, alanine 245, asparagine 246, threonine 247, glycine 295, serine 296, aspartate 320, leucine 321, serine 323, asparagine 354, asparagine 355, and aspartate 356. A Phosphoserine modification is found at serine 296. Serine 368 carries the post-translational modification Phosphoserine. Lysine 369 contributes to the NAD(+) binding site. Phosphoserine is present on serine 374. NAD(+) contacts are provided by glycine 409, aspartate 410, aspartate 438, and serine 439.

Belongs to the myo-inositol 1-phosphate synthase family. In terms of assembly, homotetramer. The cofactor is NAD(+). Post-translationally, phosphorylation at Ser-184 and Ser-374 is associated with a decrease in activity. Increasingly phosphorylated in presence of valproate.

It is found in the cytoplasm. It carries out the reaction D-glucose 6-phosphate = 1D-myo-inositol 3-phosphate. It functions in the pathway polyol metabolism; myo-inositol biosynthesis; myo-inositol from D-glucose 6-phosphate: step 1/2. Its activity is regulated as follows. Competitively inhibited by myo-2-inosose 1-phosphate, which is also an intermediate in the catalytic reaction. Competitively inhibited by 2-deoxy-myo-inositol 1-phosphate (dMIP), 1-deoxy-1-(phosphonomethyl)-myo-2-inosose (DPMI), dihydroxyacetone phosphate (DHAP), 6-deoxy-D-glucose 6-(E)-vinylhomophosphonate, 6-deoxy-D-glucitol 6-(E)-vinylhomophosphonate, 2,6-dideoxy-D-glucose 6-(E)-vinylhomophosphonate and 2,6-dideoxy-D-glucitol 6-(E)-vinylhomophosphonate. Inhibited by 2-deoxyglucitol 6-phosphate (dgtolP). Key enzyme in myo-inositol biosynthesis pathway that catalyzes the conversion of glucose 6-phosphate to 1-myo-inositol 1-phosphate in a NAD-dependent manner. Rate-limiting enzyme in the synthesis of all inositol-containing compounds. The sequence is that of Inositol-3-phosphate synthase (INO1) from Saccharomyces cerevisiae (strain ATCC 204508 / S288c) (Baker's yeast).